Consider the following 249-residue polypeptide: Phosphomannomutase (249 aa).

The Nucleophile role is filled by Asp15. 2 residues coordinate Mg(2+): Asp15 and Asp17. Residue Asp17 is the Proton donor/acceptor of the active site. Alpha-D-mannose 1-phosphate is bound by residues Arg24, Arg126, Arg137, Arg144, Ser182, and Asp184. Residues Asp210, Phe222, and Thr227 each coordinate Mg(2+).

Belongs to the eukaryotic PMM family. As to quaternary structure, homodimer. The cofactor is Mg(2+). As to expression, expressed in roots, leaves, flag leaves and immature spikes.

It localises to the cytoplasm. The enzyme catalyses alpha-D-mannose 1-phosphate = D-mannose 6-phosphate. It functions in the pathway nucleotide-sugar biosynthesis; GDP-alpha-D-mannose biosynthesis; alpha-D-mannose 1-phosphate from D-fructose 6-phosphate: step 2/2. Catalyzes the interconversion of mannose-6-phosphate to mannose-1-phosphate, the precursor for the synthesis of GDP-mannose. GDP-mannose is an essential sugar nucleotide for the synthesis of D-mannose-containing cell wall polysaccharides (galactomannans and glucomannans), glycolipids, glycoproteins and the antioxidant L-ascorbate. Can complement the yeast temperature-sensitive mutant sec53-6. This Triticum aestivum (Wheat) protein is Phosphomannomutase.